A 156-amino-acid chain; its full sequence is Small ribosomal subunit protein uS7 (156 aa).

This sequence belongs to the universal ribosomal protein uS7 family. As to quaternary structure, part of the 30S ribosomal subunit. Contacts proteins S9 and S11.

In terms of biological role, one of the primary rRNA binding proteins, it binds directly to 16S rRNA where it nucleates assembly of the head domain of the 30S subunit. Is located at the subunit interface close to the decoding center, probably blocks exit of the E-site tRNA. The chain is Small ribosomal subunit protein uS7 from Laribacter hongkongensis (strain HLHK9).